We begin with the raw amino-acid sequence, 1003 residues long: cGMP-dependent protein kinase (1003 aa).

The segment at 1 to 141 (MGACSSKAQH…KAIKQQEDTQ (141 aa)) is disordered. Residue glycine 2 is the site of N-myristoyl glycine attachment. The S-palmitoyl cysteine moiety is linked to residue cysteine 4. Low complexity predominate over residues 69 to 85 (EQQQQQQQQQQQQQEQQ). 2 stretches are compositionally biased toward basic and acidic residues: residues 86–109 (QHPE…ERKP) and 127–141 (ERKV…EDTQ). CNMP-binding domain stretches follow at residues 173 to 289 (VCSS…FLAS), 292 to 391 (FFEM…RVLG), 411 to 548 (VFAS…ATLG), and 570 to 669 (IFRY…LQIV). 3',5'-cyclic GMP is bound by residues glycine 237, glutamate 238, arginine 247, and threonine 248. 3',5'-cyclic GMP-binding residues include arginine 625, glycine 634, glutamate 635, alanine 637, arginine 644, and serine 645. Residues 693–950 (LNVVRVVGRG…YKDIKEHAFF (258 aa)) form the Protein kinase domain. ATP is bound by residues 699–707 (VGRGTFGTV) and lysine 722. Aspartate 816 serves as the catalytic Proton acceptor. An AGC-kinase C-terminal domain is found at 951-1003 (SDFDWDRLAGRDLSPPLLPKGEIYAEDAEEGGLDIEEDEGIELEDEYEWDKDF).

It belongs to the protein kinase superfamily. AGC Ser/Thr protein kinase family. cGMP subfamily. In terms of assembly, monomer. Mg(2+) is required as a cofactor.

It localises to the cell membrane. The protein resides in the cytoplasm. It carries out the reaction L-seryl-[protein] + ATP = O-phospho-L-seryl-[protein] + ADP + H(+). It catalyses the reaction L-threonyl-[protein] + ATP = O-phospho-L-threonyl-[protein] + ADP + H(+). Its activity is regulated as follows. Activated by cGMP. The cGMP-binding domains acts cooperatively to activate PKG. Inhibited by the antiparasitic small molecule 4-[2-(4-fluorophenyl)-5-(1-methylpiperidine-4-yl)-1Hpyrrol- 3-yl]pyridine (compound 1). Serine/threonine protein kinase which acts as a downstream effector of the second messenger cGMP. This is cGMP-dependent protein kinase from Eimeria tenella (Coccidian parasite).